The sequence spans 307 residues: ATP-dependent (S)-NAD(P)H-hydrate dehydratase (307 aa).

A YjeF C-terminal domain is found at 1–291 (MDHFIKLLPK…DEIPKLVRDV (291 aa)). (6S)-NADPHX-binding positions include glycine 96 and 150 to 156 (NIVEFSR). ATP is bound by residues 194–198 (KGEVD) and 214–223 (SSLRRCGGQG). Aspartate 224 contacts (6S)-NADPHX.

The protein belongs to the NnrD/CARKD family. It depends on Mg(2+) as a cofactor.

The enzyme catalyses (6S)-NADHX + ATP = ADP + phosphate + NADH + H(+). It carries out the reaction (6S)-NADPHX + ATP = ADP + phosphate + NADPH + H(+). Functionally, catalyzes the dehydration of the S-form of NAD(P)HX at the expense of ATP, which is converted to ADP. Together with NAD(P)HX epimerase, which catalyzes the epimerization of the S- and R-forms, the enzyme allows the repair of both epimers of NAD(P)HX, a damaged form of NAD(P)H that is a result of enzymatic or heat-dependent hydration. The protein is ATP-dependent (S)-NAD(P)H-hydrate dehydratase of Caenorhabditis elegans.